Here is a 158-residue protein sequence, read N- to C-terminus: C-type lectin lectoxin-Enh4 (158 aa).

The first 23 residues, 1–23 (MGQFTVVSLGLLAMFLSLSGAKG), serve as a signal peptide directing secretion. 3 disulfides stabilise this stretch: C26-C37, C54-C154, and C129-C146. In terms of domain architecture, C-type lectin spans 33 to 155 (RNGVCNKLFP…CASLHPFICQ (123 aa)). The short motif at 119-121 (EPN) is the Mannose-binding element. Ca(2+) contacts are provided by E127, N142, and D143.

This sequence belongs to the true venom lectin family. In terms of tissue distribution, expressed by the venom gland.

The protein localises to the secreted. In terms of biological role, mannose-binding lectin which recognizes specific carbohydrate structures and agglutinates a variety of animal cells by binding to cell-surface glycoproteins and glycolipids. May be a calcium-dependent lectin. In Pseudoferania polylepis (Macleay's water snake), this protein is C-type lectin lectoxin-Enh4.